A 209-amino-acid chain; its full sequence is Phosphoheptose isomerase (209 aa).

Residues Ile-50–Ala-209 form the SIS domain. Asn-65–Gly-67 serves as a coordination point for substrate. Zn(2+)-binding residues include His-74 and Glu-78. Substrate is bound by residues Glu-78, Asn-109 to Asp-110, Ser-135 to Ser-137, Ser-140, and Gln-188. Positions 188 and 196 each coordinate Zn(2+).

Belongs to the SIS family. GmhA subfamily. Requires Zn(2+) as cofactor.

It is found in the cytoplasm. The enzyme catalyses 2 D-sedoheptulose 7-phosphate = D-glycero-alpha-D-manno-heptose 7-phosphate + D-glycero-beta-D-manno-heptose 7-phosphate. Its pathway is carbohydrate biosynthesis; D-glycero-D-manno-heptose 7-phosphate biosynthesis; D-glycero-alpha-D-manno-heptose 7-phosphate and D-glycero-beta-D-manno-heptose 7-phosphate from sedoheptulose 7-phosphate: step 1/1. Functionally, catalyzes the isomerization of sedoheptulose 7-phosphate in D-glycero-D-manno-heptose 7-phosphate. In Chlorobaculum parvum (strain DSM 263 / NCIMB 8327) (Chlorobium vibrioforme subsp. thiosulfatophilum), this protein is Phosphoheptose isomerase.